We begin with the raw amino-acid sequence, 583 residues long: 2-succinyl-5-enolpyruvyl-6-hydroxy-3-cyclohexene-1-carboxylate synthase (583 aa).

This sequence belongs to the TPP enzyme family. MenD subfamily. As to quaternary structure, homodimer. It depends on Mg(2+) as a cofactor. Requires Mn(2+) as cofactor. Thiamine diphosphate serves as cofactor.

It carries out the reaction isochorismate + 2-oxoglutarate + H(+) = 5-enolpyruvoyl-6-hydroxy-2-succinyl-cyclohex-3-ene-1-carboxylate + CO2. The protein operates within quinol/quinone metabolism; 1,4-dihydroxy-2-naphthoate biosynthesis; 1,4-dihydroxy-2-naphthoate from chorismate: step 2/7. It functions in the pathway cofactor biosynthesis; phylloquinone biosynthesis. In terms of biological role, catalyzes the thiamine diphosphate-dependent decarboxylation of 2-oxoglutarate and the subsequent addition of the resulting succinic semialdehyde-thiamine pyrophosphate anion to isochorismate to yield 2-succinyl-5-enolpyruvyl-6-hydroxy-3-cyclohexene-1-carboxylate (SEPHCHC). The sequence is that of 2-succinyl-5-enolpyruvyl-6-hydroxy-3-cyclohexene-1-carboxylate synthase from Trichormus variabilis (strain ATCC 29413 / PCC 7937) (Anabaena variabilis).